The primary structure comprises 54 residues: Large ribosomal subunit protein bL32c (54 aa).

The protein belongs to the bacterial ribosomal protein bL32 family.

It localises to the plastid. It is found in the chloroplast. In Piper cenocladum (Ant piper), this protein is Large ribosomal subunit protein bL32c.